An 838-amino-acid chain; its full sequence is Probable beta-glucosidase I (838 aa).

N-linked (GlcNAc...) asparagine glycosylation occurs at asparagine 197. Residue aspartate 225 is part of the active site. The region spanning 395–555 is the PA14 domain; the sequence is DGKKGFKFRV…SQEELISKAA (161 aa). Asparagine 493 carries N-linked (GlcNAc...) asparagine glycosylation.

It belongs to the glycosyl hydrolase 3 family.

The protein localises to the secreted. The catalysed reaction is Hydrolysis of terminal, non-reducing beta-D-glucosyl residues with release of beta-D-glucose.. It functions in the pathway glycan metabolism; cellulose degradation. Its function is as follows. Beta-glucosidases are one of a number of cellulolytic enzymes involved in the degradation of cellulosic biomass. Catalyzes the last step releasing glucose from the inhibitory cellobiose. In Aspergillus fumigatus (strain ATCC MYA-4609 / CBS 101355 / FGSC A1100 / Af293) (Neosartorya fumigata), this protein is Probable beta-glucosidase I (bglI).